We begin with the raw amino-acid sequence, 350 residues long: HRLAGRHPQDNYEDSTQSSIFTYTNSNSTRGPFEGPNYHIAPRWVYHLTSVWMLFVVVASVFTNGLVLAATMKFKKLRHPLNWILVNLAIADLAETVIASTISVVNQVHGYFVLGHPMCVLEGYTVSLCGITGLWSLAIISWERWLVVCKPFGNVRFDAKLAIVGVAFSWIWSAVWTAPPIFGWSRYWPHGLKTSCGPDVFSGSSYPGVQSYMIVLMITCCFLPLGIIVLCYLQVWLAIRAVAKQQKESESTQKAEKEVTRMVVVMIVAYCVCWGPYTFFACFAAANPGYAFHPLMAALPAYFAKSATIYNPIIYVFMNRQFRNCILQLFGKKVDDGSELSSASKTEVSS.

Over 1–45 (HRLAGRHPQDNYEDSTQSSIFTYTNSNSTRGPFEGPNYHIAPRWV) the chain is Extracellular. Asn-27 is a glycosylation site (N-linked (GlcNAc...) asparagine). Residues 46–70 (YHLTSVWMLFVVVASVFTNGLVLAA) form a helical membrane-spanning segment. The Cytoplasmic portion of the chain corresponds to 71-82 (TMKFKKLRHPLN). A helical transmembrane segment spans residues 83–108 (WILVNLAIADLAETVIASTISVVNQV). At 109–122 (HGYFVLGHPMCVLE) the chain is on the extracellular side. Cys-119 and Cys-196 form a disulfide bridge. Residues 123 to 142 (GYTVSLCGITGLWSLAIISW) traverse the membrane as a helical segment. At 143 to 161 (ERWLVVCKPFGNVRFDAKL) the chain is on the cytoplasmic side. The helical transmembrane segment at 162-185 (AIVGVAFSWIWSAVWTAPPIFGWS) threads the bilayer. The Extracellular segment spans residues 186 to 211 (RYWPHGLKTSCGPDVFSGSSYPGVQS). Residues 212 to 239 (YMIVLMITCCFLPLGIIVLCYLQVWLAI) form a helical membrane-spanning segment. The Cytoplasmic segment spans residues 240 to 261 (RAVAKQQKESESTQKAEKEVTR). Residues 262-285 (MVVVMIVAYCVCWGPYTFFACFAA) traverse the membrane as a helical segment. At 286–293 (ANPGYAFH) the chain is on the extracellular side. A helical transmembrane segment spans residues 294 to 318 (PLMAALPAYFAKSATIYNPIIYVFM). Lys-305 carries the N6-(retinylidene)lysine modification. Residues 319-350 (NRQFRNCILQLFGKKVDDGSELSSASKTEVSS) are Cytoplasmic-facing.

It belongs to the G-protein coupled receptor 1 family. Opsin subfamily. Phosphorylated on some or all of the serine and threonine residues present in the C-terminal region. In terms of tissue distribution, the color pigments are found in the cone photoreceptor cells.

Its subcellular location is the membrane. In terms of biological role, visual pigments are the light-absorbing molecules that mediate vision. They consist of an apoprotein, opsin, covalently linked to cis-retinal. This Callithrix jacchus (White-tufted-ear marmoset) protein is Opsin, longwave 563 nm.